Reading from the N-terminus, the 585-residue chain is Formate--tetrahydrofolate ligase (585 aa).

74-81 (TPLGEGKT) is a binding site for ATP.

Belongs to the formate--tetrahydrofolate ligase family.

It carries out the reaction (6S)-5,6,7,8-tetrahydrofolate + formate + ATP = (6R)-10-formyltetrahydrofolate + ADP + phosphate. It participates in one-carbon metabolism; tetrahydrofolate interconversion. The protein is Formate--tetrahydrofolate ligase of Yersinia enterocolitica serotype O:8 / biotype 1B (strain NCTC 13174 / 8081).